Reading from the N-terminus, the 369-residue chain is Anhydro-N-acetylmuramic acid kinase (369 aa).

12–19 (GTSLDGVD) provides a ligand contact to ATP.

The protein belongs to the anhydro-N-acetylmuramic acid kinase family.

The catalysed reaction is 1,6-anhydro-N-acetyl-beta-muramate + ATP + H2O = N-acetyl-D-muramate 6-phosphate + ADP + H(+). It functions in the pathway amino-sugar metabolism; 1,6-anhydro-N-acetylmuramate degradation. The protein operates within cell wall biogenesis; peptidoglycan recycling. Catalyzes the specific phosphorylation of 1,6-anhydro-N-acetylmuramic acid (anhMurNAc) with the simultaneous cleavage of the 1,6-anhydro ring, generating MurNAc-6-P. Is required for the utilization of anhMurNAc either imported from the medium or derived from its own cell wall murein, and thus plays a role in cell wall recycling. The sequence is that of Anhydro-N-acetylmuramic acid kinase from Escherichia coli O157:H7.